Consider the following 94-residue polypeptide: Co-chaperonin GroES (94 aa).

It belongs to the GroES chaperonin family. In terms of assembly, heptamer of 7 subunits arranged in a ring. Interacts with the chaperonin GroEL.

It localises to the cytoplasm. Its function is as follows. Together with the chaperonin GroEL, plays an essential role in assisting protein folding. The GroEL-GroES system forms a nano-cage that allows encapsulation of the non-native substrate proteins and provides a physical environment optimized to promote and accelerate protein folding. GroES binds to the apical surface of the GroEL ring, thereby capping the opening of the GroEL channel. In Geobacillus thermodenitrificans (strain NG80-2), this protein is Co-chaperonin GroES.